A 688-amino-acid polypeptide reads, in one-letter code: MTNKQQTLFEPVLIRNALMDSVKKCHPAAQWRNPVMFVVYLGSGLTTILWIAMLAGQFKGNALFTGNIALWLWFTVLFANFAEALAEGRSKAQAASLKGVRKTSWATKLHSANRNGSREKAPSDSLRKGDIVIIEAGETIPCDGEVIEGGASVDESAITGESAPVIRESGGDFSSVTGGTHVLSDWLVVECSVNPGETFLDRMISMVEGAKRRKTPNEIALTILLTALTIIFLLVCVTLLPFSIFSVEINHSGQPITVTVLIALLVCLIPTTIGGLLSAIGVAGMSRMLSANVIATSGRAVEAAGDVDVLLLDKTGTITLGNRQASQFLPVPGITEQRLADAAQLSSLADETPEGRSIVILAKQRFNLRERDLRSLNATFVPFSAMTRMSGVNVENRMIRKGAVDAIRRHIEANHGKFPEAVEILVQTVARKGGTPLVVAENQQVLGVVALKDIVKGGIKERFSEMRRMGIKTVMITGDNRLTAAAIAAEAGVDDFLAEATPEAKLALIRQYQSEGRLVAMTGDGTNDAPALAQADVAVAMNSGTQAAKEAGNMVDLDSNPTKLIEVVHIGKQMLMTRGSLTTFSIANDIAKYFAIIPAAFAVTYPQLNILNIMHLHSPTSAVLSTVIFNALIIVFLIPLALKGVSYRPMNASALLRRNLWIYGLGGLIAPFIGIKLIDLLLTLLILK.

Helical transmembrane passes span 35–55 (VMFVVYLGSGLTTILWIAMLA), 62–82 (ALFTGNIALWLWFTVLFANFA), 219–239 (IALTILLTALTIIFLLVCVTL), and 260–280 (VLIALLVCLIPTTIGGLLSAI). The active-site 4-aspartylphosphate intermediate is D313. ATP contacts are provided by residues D350, E354, 383-390 (FSAMTRMS), and K401. Residues D524 and D528 each contribute to the Mg(2+) site. 3 helical membrane passes run 594–614 (FAIIPAAFAVTYPQLNILNIM), 622–642 (AVLSTVIFNALIIVFLIPLAL), and 667–687 (GLIAPFIGIKLIDLLLTLLIL).

Belongs to the cation transport ATPase (P-type) (TC 3.A.3) family. Type IA subfamily. The system is composed of three essential subunits: KdpA, KdpB and KdpC.

Its subcellular location is the cell inner membrane. It catalyses the reaction K(+)(out) + ATP + H2O = K(+)(in) + ADP + phosphate + H(+). In terms of biological role, part of the high-affinity ATP-driven potassium transport (or Kdp) system, which catalyzes the hydrolysis of ATP coupled with the electrogenic transport of potassium into the cytoplasm. This subunit is responsible for energy coupling to the transport system and for the release of the potassium ions to the cytoplasm. In Photorhabdus laumondii subsp. laumondii (strain DSM 15139 / CIP 105565 / TT01) (Photorhabdus luminescens subsp. laumondii), this protein is Potassium-transporting ATPase ATP-binding subunit.